A 430-amino-acid chain; its full sequence is Enolase (430 aa).

Gln-167 serves as a coordination point for (2R)-2-phosphoglycerate. The Proton donor role is filled by Glu-209. 3 residues coordinate Mg(2+): Asp-246, Glu-287, and Asp-314. The (2R)-2-phosphoglycerate site is built by Lys-339, Arg-368, Ser-369, and Lys-390. The Proton acceptor role is filled by Lys-339.

It belongs to the enolase family. Mg(2+) is required as a cofactor.

Its subcellular location is the cytoplasm. The protein resides in the secreted. It localises to the cell surface. It catalyses the reaction (2R)-2-phosphoglycerate = phosphoenolpyruvate + H2O. The protein operates within carbohydrate degradation; glycolysis; pyruvate from D-glyceraldehyde 3-phosphate: step 4/5. Catalyzes the reversible conversion of 2-phosphoglycerate (2-PG) into phosphoenolpyruvate (PEP). It is essential for the degradation of carbohydrates via glycolysis. The polypeptide is Enolase (Prochlorococcus marinus (strain MIT 9301)).